Here is a 147-residue protein sequence, read N- to C-terminus: uncharacterized protein (147 aa).

Residues 1–147 enclose the N-acetyltransferase domain; it reads MEIRRADKDD…RPESGGSGSE (147 aa).

This sequence belongs to the acetyltransferase family.

This is an uncharacterized protein from Archaeoglobus fulgidus (strain ATCC 49558 / DSM 4304 / JCM 9628 / NBRC 100126 / VC-16).